The chain runs to 371 residues: Bifunctional enzyme IspD/IspF (371 aa).

The segment at 1–214 is 2-C-methyl-D-erythritol 4-phosphate cytidylyltransferase; the sequence is MNSCFIILAG…NSDIKFNNLI (214 aa). Positions 215-371 are 2-C-methyl-D-erythritol 2,4-cyclodiphosphate synthase; it reads KFGIGFDVHR…EVIASVIKND (157 aa). A divalent metal cation contacts are provided by D221 and H223. Residues 221-223 and 247-248 contribute to the 4-CDP-2-C-methyl-D-erythritol 2-phosphate site; these read DVH and HS. Residue H255 coordinates a divalent metal cation. Residues 269-271, 274-278, and K355 each bind 4-CDP-2-C-methyl-D-erythritol 2-phosphate; these read DIG and FSDKN.

The protein in the N-terminal section; belongs to the IspD/TarI cytidylyltransferase family. IspD subfamily. This sequence in the C-terminal section; belongs to the IspF family. Requires a divalent metal cation as cofactor.

The enzyme catalyses 2-C-methyl-D-erythritol 4-phosphate + CTP + H(+) = 4-CDP-2-C-methyl-D-erythritol + diphosphate. The catalysed reaction is 4-CDP-2-C-methyl-D-erythritol 2-phosphate = 2-C-methyl-D-erythritol 2,4-cyclic diphosphate + CMP. It participates in isoprenoid biosynthesis; isopentenyl diphosphate biosynthesis via DXP pathway; isopentenyl diphosphate from 1-deoxy-D-xylulose 5-phosphate: step 2/6. It functions in the pathway isoprenoid biosynthesis; isopentenyl diphosphate biosynthesis via DXP pathway; isopentenyl diphosphate from 1-deoxy-D-xylulose 5-phosphate: step 4/6. Functionally, bifunctional enzyme that catalyzes the formation of 4-diphosphocytidyl-2-C-methyl-D-erythritol from CTP and 2-C-methyl-D-erythritol 4-phosphate (MEP) (IspD), and catalyzes the conversion of 4-diphosphocytidyl-2-C-methyl-D-erythritol 2-phosphate (CDP-ME2P) to 2-C-methyl-D-erythritol 2,4-cyclodiphosphate (ME-CPP) with a corresponding release of cytidine 5-monophosphate (CMP) (IspF). This Pelagibacter ubique (strain HTCC1062) protein is Bifunctional enzyme IspD/IspF.